The sequence spans 704 residues: Polyribonucleotide nucleotidyltransferase (704 aa).

Mg(2+)-binding residues include aspartate 486 and aspartate 492. The KH domain occupies 553-612 (PRIYTMKINPEKIKDVIGKGGSVIRALTDETGTTIEIEDDGTIKIAATDGDKAKHAIRRI). The 69-residue stretch at 622-690 (GRIYAGKVTR…RQGRIRLSIK (69 aa)) folds into the S1 motif domain.

It belongs to the polyribonucleotide nucleotidyltransferase family. Component of the RNA degradosome, which is a multiprotein complex involved in RNA processing and mRNA degradation. Mg(2+) is required as a cofactor.

Its subcellular location is the cytoplasm. The enzyme catalyses RNA(n+1) + phosphate = RNA(n) + a ribonucleoside 5'-diphosphate. In terms of biological role, involved in mRNA degradation. Catalyzes the phosphorolysis of single-stranded polyribonucleotides processively in the 3'- to 5'-direction. The polypeptide is Polyribonucleotide nucleotidyltransferase (Yersinia pseudotuberculosis serotype IB (strain PB1/+)).